The following is a 449-amino-acid chain: Tubulin alpha-2B chain (449 aa).

Position 11 (Gln11) interacts with GTP. The residue at position 40 (Lys40) is an N6-acetyllysine. The GTP site is built by Glu71, Ser140, Gly144, Thr145, Thr179, Asn206, and Asn228. Glu71 lines the Mg(2+) pocket. Residue Glu254 is part of the active site.

Belongs to the tubulin family. In terms of assembly, dimer of alpha and beta chains. A typical microtubule is a hollow water-filled tube with an outer diameter of 25 nm and an inner diameter of 15 nM. Alpha-beta heterodimers associate head-to-tail to form protofilaments running lengthwise along the microtubule wall with the beta-tubulin subunit facing the microtubule plus end conferring a structural polarity. Microtubules usually have 13 protofilaments but different protofilament numbers can be found in some organisms and specialized cells. The cofactor is Mg(2+). Acetylation of alpha chains at Lys-40 stabilizes microtubules and affects affinity and processivity of microtubule motors. This modification has a role in multiple cellular functions, ranging from cell motility, cell cycle progression or cell differentiation to intracellular trafficking and signaling.

It is found in the cytoplasm. The protein localises to the cytoskeleton. It localises to the spindle. Its subcellular location is the nucleus. The catalysed reaction is GTP + H2O = GDP + phosphate + H(+). Functionally, tubulin is the major constituent of microtubules, a cylinder consisting of laterally associated linear protofilaments composed of alpha- and beta-tubulin heterodimers. Microtubules grow by the addition of GTP-tubulin dimers to the microtubule end, where a stabilizing cap forms. Below the cap, tubulin dimers are in GDP-bound state, owing to GTPase activity of alpha-tubulin. The polypeptide is Tubulin alpha-2B chain (ALTBE) (Physarum polycephalum (Slime mold)).